The primary structure comprises 470 residues: Asparagine--tRNA ligase (470 aa).

Belongs to the class-II aminoacyl-tRNA synthetase family. As to quaternary structure, homodimer.

The protein resides in the cytoplasm. It carries out the reaction tRNA(Asn) + L-asparagine + ATP = L-asparaginyl-tRNA(Asn) + AMP + diphosphate + H(+). The sequence is that of Asparagine--tRNA ligase from Blochmanniella pennsylvanica (strain BPEN).